A 425-amino-acid chain; its full sequence is MGGELVTGLGALRRRKRLLEQEKRVAGWALVLAGTGIGLMVLHAEMLWFLGCKWVLYLLLVKCLITLSTAFLLCLIVVFHAKEVQLFMTDNGLRDWRVALTRRQVAQILLELLVCGVHPVPLRSPHCTLAGEATDSQAWPGFLGEGEALLSLAMLLRLYLVPRAVLLRSGVLLNASYRSIGALNQVRFRHWFVAKLYMNTHPGRLLLGLTLGLWLTTAWVLSVAERQAVNATGHLTDTLWLIPITFLTIGYGDVVPGTLWGKIVCLCTGVMGVCCTALLVAVVARKLEFNKAEKHVHNFMMDIHYAKEMKESAARLLQEAWMYYKHTRRKDSRAARRHQRKMLAAIHTFRQVRLKHRKLREQVNSMVDISKMHMILCDLQLGLSASHLALEKRIDGLAGKLDALTELLSTALQQQQPPEPIQEAT.

The chain crosses the membrane as a helical span at residues L30–L50. The chain crosses the membrane as a helical span at residues L59–F79. Residues V105–P121 form a helical membrane-spanning segment. Residues G141 to V161 traverse the membrane as a helical segment. Residues L205–E225 traverse the membrane as a helical segment. Positions L239–L259 form an intramembrane region, pore-forming. A helical transmembrane segment spans residues I263–V283. The segment at A284–A345 is calmodulin-binding. H356 carries the phosphohistidine modification.

It belongs to the potassium channel KCNN family. KCa3.1/KCNN4 subfamily. Homodimer. Homotetramer. Heterotetramer of potassium channel proteins. Interacts with MTMR6; this interaction leads to selective dephosphorylation of PI(3)P in a lipid microdomain adjacent to KCNN4, resulting in a decrease of intermediate conductance calcium-activated potassium channel activity. Interacts (via the C-tail domain) with CALM1; the calmodulin binding is constitutive, does not require calcium and mediates calcium-dependent gating and four calmodulin molecules bind to one channel tetramer. In terms of processing, phosphorylation at His-356 by NDKB activates the intermediate conductance calcium-activated potassium channel activity, and conversely it's dephosphorylation by PHPT1 inhibits this activity.

It is found in the cell membrane. The protein resides in the cell projection. The protein localises to the ruffle membrane. The catalysed reaction is K(+)(in) = K(+)(out). Intermediate conductance calcium-activated potassium channel that mediates the voltage-independent transmembrane transfer of potassium across the cell membrane through a constitutive interaction with calmodulin which binds the intracellular calcium allowing its opening. The current is characterized by a voltage-independent activation, an intracellular calcium concentration increase-dependent activation and a single-channel conductance of about 25 picosiemens. Also presents an inwardly rectifying current, thus reducing its already small outward conductance of potassium ions, which is particularly the case when the membrane potential displays positive values, above + 20 mV. Controls calcium influx during vascular contractility by being responsible of membrane hyperpolarization induced by vasoactive factors in proliferative vascular smooth muscle cell types. Following calcium influx, the consecutive activation of KCNN4 channel leads to a hyperpolarization of the cell membrane potential and hence an increase of the electrical driving force for further calcium influx promoting sustained calcium entry in response to stimulation with chemotactic peptides. Required for maximal calcium influx and proliferation during the reactivation of naive T-cells. Plays a role in the late stages of EGF-induced macropinocytosis through activation by PI(3)P. This is Intermediate conductance calcium-activated potassium channel protein 4 from Rattus norvegicus (Rat).